The following is a 335-amino-acid chain: UPF0065 protein BB4329 (335 aa).

Positions 1–39 (MNKNIPAFHRRCHGLVQGLARTLLLAPVLLALSVPAAQA) are cleaved as a signal peptide.

This sequence belongs to the UPF0065 (bug) family.

The protein resides in the periplasm. This is UPF0065 protein BB4329 from Bordetella bronchiseptica (strain ATCC BAA-588 / NCTC 13252 / RB50) (Alcaligenes bronchisepticus).